The following is a 243-amino-acid chain: 1-(5-phosphoribosyl)-5-[(5-phosphoribosylamino)methylideneamino] imidazole-4-carboxamide isomerase (243 aa).

The active-site Proton acceptor is aspartate 8. Aspartate 130 functions as the Proton donor in the catalytic mechanism.

Belongs to the HisA/HisF family.

It is found in the cytoplasm. It catalyses the reaction 1-(5-phospho-beta-D-ribosyl)-5-[(5-phospho-beta-D-ribosylamino)methylideneamino]imidazole-4-carboxamide = 5-[(5-phospho-1-deoxy-D-ribulos-1-ylimino)methylamino]-1-(5-phospho-beta-D-ribosyl)imidazole-4-carboxamide. The protein operates within amino-acid biosynthesis; L-histidine biosynthesis; L-histidine from 5-phospho-alpha-D-ribose 1-diphosphate: step 4/9. This Acinetobacter baylyi (strain ATCC 33305 / BD413 / ADP1) protein is 1-(5-phosphoribosyl)-5-[(5-phosphoribosylamino)methylideneamino] imidazole-4-carboxamide isomerase.